The sequence spans 163 residues: Nucleotide-binding protein HS_0688 (163 aa).

It belongs to the YajQ family.

In terms of biological role, nucleotide-binding protein. The sequence is that of Nucleotide-binding protein HS_0688 from Histophilus somni (strain 129Pt) (Haemophilus somnus).